Consider the following 336-residue polypeptide: MATLHAPAFELPEILNTKTNLADARIGAQVIECSDDFFAEAKRMLQFEAPIFVEDKFDDHGKWMDGWETRRKRHAGYDWCIVKLGVSGKISALDIDTTFFTGNYPASASLEACYAPNGDLTGAKWQSILENTELGPSQHHIFMVNNDAIFTHIRLNIFPDGGVARLRVYGDVHIQVTDHEQTLDLLALENGGRVIAYSDAHFGHPRNLINPGRGVNMGDGWETKRRRAPGYDWCILALGKSGKIEKIEIDTAHFKGNFPAEVSIQAVYLENATDAQLIPQSMFWSYLLEAQPMQMDHIHEYVNEILQYEKVSHIRINMIPDGGISRVRLWGKIAKS.

The protein belongs to the allantoicase family.

It catalyses the reaction allantoate + H2O = (S)-ureidoglycolate + urea. The protein operates within nitrogen metabolism; (S)-allantoin degradation; (S)-ureidoglycolate from allantoate (aminidohydrolase route): step 1/1. In Acinetobacter baumannii (strain ATCC 17978 / DSM 105126 / CIP 53.77 / LMG 1025 / NCDC KC755 / 5377), this protein is Probable allantoicase.